Here is a 232-residue protein sequence, read N- to C-terminus: Thiamine import ATP-binding protein ThiQ (232 aa).

Positions 2–230 (LKLTDITWLY…KASASALLGI (229 aa)) constitute an ABC transporter domain. 32-39 (GPSGAGKS) is a binding site for ATP.

The protein belongs to the ABC transporter superfamily. Thiamine importer (TC 3.A.1.19.1) family. In terms of assembly, the complex is composed of two ATP-binding proteins (ThiQ), two transmembrane proteins (ThiP) and a solute-binding protein (ThiB).

It is found in the cell inner membrane. The enzyme catalyses thiamine(out) + ATP + H2O = thiamine(in) + ADP + phosphate + H(+). Part of the ABC transporter complex ThiBPQ involved in thiamine import. Responsible for energy coupling to the transport system. This Shigella sonnei (strain Ss046) protein is Thiamine import ATP-binding protein ThiQ.